Consider the following 198-residue polypeptide: uncharacterized protein (198 aa).

This is an uncharacterized protein from Caenorhabditis elegans.